A 122-amino-acid chain; its full sequence is Large ribosomal subunit protein uL14 (122 aa).

It belongs to the universal ribosomal protein uL14 family. As to quaternary structure, part of the 50S ribosomal subunit. Forms a cluster with proteins L3 and L19. In the 70S ribosome, L14 and L19 interact and together make contacts with the 16S rRNA in bridges B5 and B8.

In terms of biological role, binds to 23S rRNA. Forms part of two intersubunit bridges in the 70S ribosome. In Rhizobium etli (strain CIAT 652), this protein is Large ribosomal subunit protein uL14.